A 584-amino-acid chain; its full sequence is UvrABC system protein C (584 aa).

In terms of domain architecture, GIY-YIG spans 12–89; the sequence is NKPGCYLFFN…IKKYHPKYNV (78 aa). The 36-residue stretch at 194 to 229 folds into the UVR domain; the sequence is NQVKQTLVKQMQKASDNLQFEQAQRIKDQITSLDFI.

This sequence belongs to the UvrC family. Interacts with UvrB in an incision complex.

The protein resides in the cytoplasm. Its function is as follows. The UvrABC repair system catalyzes the recognition and processing of DNA lesions. UvrC both incises the 5' and 3' sides of the lesion. The N-terminal half is responsible for the 3' incision and the C-terminal half is responsible for the 5' incision. This Mycoplasma mycoides subsp. mycoides SC (strain CCUG 32753 / NCTC 10114 / PG1) protein is UvrABC system protein C.